The primary structure comprises 62 residues: Light-harvesting protein B-870 alpha chain (62 aa).

N-formylmethionine is present on M1. At 1 to 12 (MWRIWQLFDPRQ) the chain is on the cytoplasmic side. A helical membrane pass occupies residues 13-33 (ALVGLATFLFVLALLIHFILL). H29 provides a ligand contact to a bacteriochlorophyll. At 34–52 (STERFNWLEGASTKPVQTS) the chain is on the periplasmic side. Residues 53 to 62 (MVMPSSDLAV) constitute a propeptide that is removed on maturation.

The protein belongs to the antenna complex alpha subunit family. The core complex is formed by different alpha and beta chains, binding bacteriochlorophyll molecules, and arranged most probably in tetrameric structures disposed around the reaction center. The non-pigmented gamma chains may constitute additional components.

It localises to the cell inner membrane. Functionally, antenna complexes are light-harvesting systems, which transfer the excitation energy to the reaction centers. This chain is Light-harvesting protein B-870 alpha chain, found in Rhodospirillum rubrum.